A 236-amino-acid polypeptide reads, in one-letter code: Adenosine 5'-phosphosulfate reductase (236 aa).

[4Fe-4S] cluster contacts are provided by cysteine 123, cysteine 124, cysteine 206, and cysteine 209. Catalysis depends on cysteine 232, which acts as the Nucleophile; cysteine thiosulfonate intermediate.

This sequence belongs to the PAPS reductase family. CysH subfamily. Requires [4Fe-4S] cluster as cofactor.

Its subcellular location is the cytoplasm. It catalyses the reaction [thioredoxin]-disulfide + sulfite + AMP + 2 H(+) = adenosine 5'-phosphosulfate + [thioredoxin]-dithiol. It functions in the pathway sulfur metabolism; hydrogen sulfide biosynthesis; sulfite from sulfate. Functionally, catalyzes the formation of sulfite from adenosine 5'-phosphosulfate (APS) using thioredoxin as an electron donor. The chain is Adenosine 5'-phosphosulfate reductase from Streptomyces coelicolor (strain ATCC BAA-471 / A3(2) / M145).